The primary structure comprises 566 residues: uncharacterized protein (566 aa).

This sequence belongs to the protein kinase superfamily. ADCK protein kinase family.

This is an uncharacterized protein from Synechocystis sp. (strain ATCC 27184 / PCC 6803 / Kazusa).